A 296-amino-acid chain; its full sequence is Fructose-bisphosphate aldolase class 1 (296 aa).

Glu-175 serves as the catalytic Proton acceptor. Residue Lys-212 is the Schiff-base intermediate with dihydroxyacetone-P of the active site.

The protein belongs to the class I fructose-bisphosphate aldolase family.

The enzyme catalyses beta-D-fructose 1,6-bisphosphate = D-glyceraldehyde 3-phosphate + dihydroxyacetone phosphate. The protein operates within carbohydrate degradation; glycolysis; D-glyceraldehyde 3-phosphate and glycerone phosphate from D-glucose: step 4/4. This is Fructose-bisphosphate aldolase class 1 (fda) from Staphylococcus carnosus (strain TM300).